A 490-amino-acid chain; its full sequence is Histone-lysine N-methyltransferase Smyd1 (490 aa).

One can recognise an SET domain in the interval 7-253 (ENVEVFTSEG…EGEELTVSYI (247 aa)). 17–19 (KGR) contacts S-adenosyl-L-methionine. Residues cysteine 52, cysteine 55, cysteine 65, cysteine 68, cysteine 74, cysteine 78, histidine 86, and cysteine 90 each contribute to the Zn(2+) site. Residues 52 to 90 (CHTCFKRQEKLHRCGQCKFAHYCDRTCQKDAWLNHKNEC) form an MYND-type zinc finger. S-adenosyl-L-methionine contacts are provided by residues histidine 135 and 205 to 206 (NH). Cysteine 208 is a Zn(2+) binding site. 270-272 (YYF) is a binding site for S-adenosyl-L-methionine. Positions 274, 276, and 279 each coordinate Zn(2+).

The protein belongs to the class V-like SAM-binding methyltransferase superfamily. In terms of assembly, interacts with HDAC1, HDAC2 and HDAC3. Interacts (via MYND-type zinc finger) with NACA isoform skNAC. Expressed in cardiac and skeletal muscle, lymphocytes and thymus.

It is found in the cytoplasm. The protein localises to the nucleus. It carries out the reaction L-lysyl(4)-[histone H3] + 3 S-adenosyl-L-methionine = N(6),N(6),N(6)-trimethyl-L-lysyl(4)-[histone H3] + 3 S-adenosyl-L-homocysteine + 3 H(+). In terms of biological role, methylates histone H3 at 'Lys-4' (H3K4me). Acts as a transcriptional repressor. Essential for cardiomyocyte differentiation and cardiac morphogenesis. The chain is Histone-lysine N-methyltransferase Smyd1 (Smyd1) from Mus musculus (Mouse).